The primary structure comprises 539 residues: Chaperonin GroEL 2 (539 aa).

Residues 30 to 33 (TLGP), K51, 87 to 91 (DGTTT), G415, 480 to 482 (NAA), and D496 each bind ATP.

This sequence belongs to the chaperonin (HSP60) family. As to quaternary structure, forms a cylinder of 14 subunits composed of two heptameric rings stacked back-to-back. Interacts with the co-chaperonin GroES.

The protein localises to the cytoplasm. The enzyme catalyses ATP + H2O + a folded polypeptide = ADP + phosphate + an unfolded polypeptide.. Its function is as follows. Together with its co-chaperonin GroES, plays an essential role in assisting protein folding. The GroEL-GroES system forms a nano-cage that allows encapsulation of the non-native substrate proteins and provides a physical environment optimized to promote and accelerate protein folding. In Sphingopyxis alaskensis (strain DSM 13593 / LMG 18877 / RB2256) (Sphingomonas alaskensis), this protein is Chaperonin GroEL 2.